Consider the following 306-residue polypeptide: Serine/threonine-protein phosphatase PP-X homolog 4 (306 aa).

Mn(2+) is bound by residues D53, H55, D81, and N113. The active-site Proton donor is the H114. The Mn(2+) site is built by H163 and H237.

The protein belongs to the PPP phosphatase family. PP-4 (PP-X) subfamily. The cofactor is Mn(2+).

The enzyme catalyses O-phospho-L-seryl-[protein] + H2O = L-seryl-[protein] + phosphate. The catalysed reaction is O-phospho-L-threonyl-[protein] + H2O = L-threonyl-[protein] + phosphate. This chain is Serine/threonine-protein phosphatase PP-X homolog 4 (Ppx4), found in Paramecium tetraurelia.